The sequence spans 462 residues: UDP-N-acetylmuramate--L-alanine ligase (462 aa).

114 to 120 (GSHGKTT) contacts ATP.

This sequence belongs to the MurCDEF family.

The protein resides in the cytoplasm. It carries out the reaction UDP-N-acetyl-alpha-D-muramate + L-alanine + ATP = UDP-N-acetyl-alpha-D-muramoyl-L-alanine + ADP + phosphate + H(+). Its pathway is cell wall biogenesis; peptidoglycan biosynthesis. In terms of biological role, cell wall formation. The sequence is that of UDP-N-acetylmuramate--L-alanine ligase from Brachyspira hyodysenteriae (strain ATCC 49526 / WA1).